The chain runs to 429 residues: MIELDINASDKSLSHRAVIFSLLAQKPCFVRNFLMGEDCLSSLEIAQNLGAKVENTAKNSFKITPPTTIKEPNKILNCNNSGTSMRLYSGLLSAQKGLFVLSGDNSLNARPMKRIIEPLKAFGAKILGREDNHFAPLAIVGGPLKACDYESPIASAQVKSAFILSALQAQGISAYKESELSRNHTEIMLKSLGANIQNQDGVLKISPLEKPLESFDFTIANDPSSAFFLALACAITPKSRLLLKNVLLNPTRIEAFEVLKKMGAHIEYVIQSKDLEVIGDIYIEHAPLKAISIDQNIASLIDEIPALSIAMLFAKGKSMVRNAKDLRAKESDRIKAVVSNFKALGIECEEFEDGFYIEGLGDASQLKQHFSKIKPPIIKSFNDHRIAMSFAVLTLALPLEIDNLECANISFPTFQLWLNLFKKRSLNGN.

3-phosphoshikimate-binding residues include lysine 11, serine 12, and arginine 16. Residue lysine 11 participates in phosphoenolpyruvate binding. Residues glycine 82 and arginine 110 each coordinate phosphoenolpyruvate. 3-phosphoshikimate is bound by residues serine 155, glutamine 157, aspartate 302, and lysine 329. Glutamine 157 provides a ligand contact to phosphoenolpyruvate. The active-site Proton acceptor is the aspartate 302. Residues arginine 333 and arginine 385 each contribute to the phosphoenolpyruvate site.

Belongs to the EPSP synthase family. Monomer.

Its subcellular location is the cytoplasm. The catalysed reaction is 3-phosphoshikimate + phosphoenolpyruvate = 5-O-(1-carboxyvinyl)-3-phosphoshikimate + phosphate. The protein operates within metabolic intermediate biosynthesis; chorismate biosynthesis; chorismate from D-erythrose 4-phosphate and phosphoenolpyruvate: step 6/7. Catalyzes the transfer of the enolpyruvyl moiety of phosphoenolpyruvate (PEP) to the 5-hydroxyl of shikimate-3-phosphate (S3P) to produce enolpyruvyl shikimate-3-phosphate and inorganic phosphate. This Helicobacter pylori (strain J99 / ATCC 700824) (Campylobacter pylori J99) protein is 3-phosphoshikimate 1-carboxyvinyltransferase.